Reading from the N-terminus, the 80-residue chain is Cell division activator CedA (80 aa).

This sequence belongs to the CedA family.

Functionally, activates the cell division inhibited by chromosomal DNA over-replication. This Salmonella choleraesuis (strain SC-B67) protein is Cell division activator CedA.